The primary structure comprises 437 residues: GTPase HflX (437 aa).

The disordered stretch occupies residues 150 to 173; sequence DRQGGGSGGGKGGGGAARGEGEKQ. Gly residues predominate over residues 152 to 167; that stretch reads QGGGSGGGKGGGGAAR. Positions 212-382 constitute a Hflx-type G domain; sequence ATAAIVGYTN…ACVEMLESRV (171 aa). GTP is bound by residues 218–225, 243–247, 265–268, 331–334, and 360–362; these read GYTNAGKS, FATLD, DTVG, NKVD, and SVK. 2 residues coordinate Mg(2+): S225 and T245.

The protein belongs to the TRAFAC class OBG-HflX-like GTPase superfamily. HflX GTPase family. As to quaternary structure, monomer. Associates with the 50S ribosomal subunit. It depends on Mg(2+) as a cofactor.

It is found in the cytoplasm. Its function is as follows. GTPase that associates with the 50S ribosomal subunit and may have a role during protein synthesis or ribosome biogenesis. This is GTPase HflX from Akkermansia muciniphila (strain ATCC BAA-835 / DSM 22959 / JCM 33894 / BCRC 81048 / CCUG 64013 / CIP 107961 / Muc).